We begin with the raw amino-acid sequence, 138 residues long: Ribosome-binding factor A (138 aa).

The disordered stretch occupies residues 116-138 (VAQDSQHQEGPASPDAKPESTEE).

It belongs to the RbfA family. Monomer. Binds 30S ribosomal subunits, but not 50S ribosomal subunits or 70S ribosomes.

Its subcellular location is the cytoplasm. One of several proteins that assist in the late maturation steps of the functional core of the 30S ribosomal subunit. Associates with free 30S ribosomal subunits (but not with 30S subunits that are part of 70S ribosomes or polysomes). Required for efficient processing of 16S rRNA. May interact with the 5'-terminal helix region of 16S rRNA. This chain is Ribosome-binding factor A, found in Pseudomonas syringae pv. tomato (strain ATCC BAA-871 / DC3000).